The primary structure comprises 275 residues: Beta-lactamase OXA-2 (275 aa).

An N-terminal signal peptide occupies residues 1-21 (MAIRIFAILFSIFSLATFAHA). Residue Ser-72 is the Acyl-ester intermediate of the active site. Lys-75 carries the N6-carboxylysine modification. Position 210-212 (210-212 (KTG)) interacts with substrate.

It belongs to the class-D beta-lactamase family.

The enzyme catalyses a beta-lactam + H2O = a substituted beta-amino acid. Functionally, this is an oxacillin-hydrolyzing beta-lactamase. This is Beta-lactamase OXA-2 (bla) from Escherichia coli.